Reading from the N-terminus, the 462-residue chain is Argininosuccinate lyase (462 aa).

The protein belongs to the lyase 1 family. Argininosuccinate lyase subfamily.

The protein resides in the cytoplasm. The catalysed reaction is 2-(N(omega)-L-arginino)succinate = fumarate + L-arginine. Its pathway is amino-acid biosynthesis; L-arginine biosynthesis; L-arginine from L-ornithine and carbamoyl phosphate: step 3/3. The sequence is that of Argininosuccinate lyase from Caldicellulosiruptor bescii (strain ATCC BAA-1888 / DSM 6725 / KCTC 15123 / Z-1320) (Anaerocellum thermophilum).